The sequence spans 173 residues: Atrial gland and califin peptides (173 aa).

The signal sequence occupies residues 1–21 (MKANTMFIILCLSLSTLCVSS). A propeptide spanning residues 22-34 (QSTSVHGKIFVPN) is cleaved from the precursor. Residue isoleucine 69 is modified to Isoleucine amide. The propeptide occupies 73–114 (AAGEMEQSEGQNPETKSHSWRKRSVLTPSLSSLGESLESGIS). Residues 75 to 94 (GEMEQSEGQNPETKSHSWRK) are disordered. Cysteine 141 and cysteine 172 are joined by a disulfide. Leucine 152 is modified (leucine amide).

This sequence belongs to the molluscan ELH family. In terms of assembly, califin A consists of a 36-residue large subunit bound by a single disulfide bond to a 18-residue small subunit.

The protein localises to the secreted. Its function is as follows. The atrial gland peptide A and peptide B precursors are the source of the 2 peptides that, upon release from this reproductive system gland, initiate the egg-laying process by exciting the bag cell neurons. These neurons, clustered in neural connectives near the abdominal ganglion, in turn release other peptides that act directly on the ganglion and also, via the circulating hemolymph, on many other organs to control the physiological processes of egg-laying. One of these other peptides is the egg-laying hormone. Functionally, injected in sexually mature animals califin A excites LB and LC cells of the abdominal ganglion and causes egg-laying. In Aplysia californica (California sea hare), this protein is Atrial gland and califin peptides.